Consider the following 101-residue polypeptide: Enhancer of yellow 2 transcription factor (101 aa).

Belongs to the ENY2 family. Component of the nuclear pore complex (NPC)-associated AMEX complex (anchoring and mRNA export complex), composed of at least e(y)2 and xmas-2. Component of the SAGA transcription coactivator-HAT complexes, at least composed of Ada2b, e(y)2, Pcaf/Gcn5, Taf10 and Nipped-A/Trrap. Within the SAGA complex, e(y)2, Sgf11, and not/nonstop form an additional subcomplex of SAGA called the DUB module (deubiquitination module). Component of the THO complex, composed of at least e(y)2, HPR1, THO2, THOC5, THOC6 and THOC7. Interacts with e(y)1. Interacts with su(Hw) (via zinc fingers). Interacts with xmas-2; required for localization to the nuclear periphery. Interacts with the nuclear pore complex (NPC).

The protein resides in the nucleus. The protein localises to the nucleoplasm. It is found in the cytoplasm. Involved in mRNA export coupled transcription activation by association with both the AMEX and the SAGA complexes. The SAGA complex is a multiprotein complex that activates transcription by remodeling chromatin and mediating histone acetylation and deubiquitination. Within the SAGA complex, participates in a subcomplex that specifically deubiquitinates histone H2B. The SAGA complex is recruited to specific gene promoters by activators, where it is required for transcription. Required for nuclear receptor-mediated transactivation. Involved in transcription elongation by recruiting the THO complex onto nascent mRNA. The AMEX complex functions in docking export-competent ribonucleoprotein particles (mRNPs) to the nuclear entrance of the nuclear pore complex (nuclear basket). AMEX participates in mRNA export and accurate chromatin positioning in the nucleus by tethering genes to the nuclear periphery. In Drosophila simulans (Fruit fly), this protein is Enhancer of yellow 2 transcription factor.